The following is a 958-amino-acid chain: UPF0182 protein TW644 (958 aa).

7 helical membrane-spanning segments follow: residues 14–34, 59–79, 107–127, 166–186, 205–225, 249–269, and 280–300; these read IAILSVVAFLVLIALTAFFLV, IFVVFCLAFVFVSIFLWLCMF, KIVVLLVSLGLGAVAGIFAAS, LFFLLVTFVLGGILSILISVV, VQYAVLAAGIFVLLGLEFWLN, LIPGFAVLALVALGVALLFCI, and IIGVALAVVSALVVITALPWG.

Belongs to the UPF0182 family.

The protein resides in the cell membrane. This chain is UPF0182 protein TW644, found in Tropheryma whipplei (strain TW08/27) (Whipple's bacillus).